A 429-amino-acid polypeptide reads, in one-letter code: MNHAKSEAVHAEALQHIVGGVNSPSRSYKAVGGGSPVAMVRGKGAYFWDVDGNRYIDYLAAYGPIVTGHGHPHIAKAITHAAENGTLFGTPTEYEVTFANMLKEAIPSMDKVRFNNSGTEAVMTTIRVARAYTGRTKIMKFAGCYHGHFDLVLVAAGSGPATLGTPDSAGVTTSTAEEVITVPFNNPEAFTEAMNTWGDEIAAILIEPIVGNFGIVEPNPGFLELVHATAKEKGALTIYDEVITAFRFHYGGAQNLLGLTPDLTALGKVIGGGLPIGAYGGRKEIMDTVAPLGPAYQAGTMAGNPASMQAGIACLEVLQTPGIYDEMDRLGGILEEGILAAAKEHGVTITLNRLKGALTIYFTDVKVENYEQAENSNGEIFGRFFKLMLEQGVNLAPSKYEAWFLTTEHTEADILETIKAVNYAFSQLS.

Lys268 carries the post-translational modification N6-(pyridoxal phosphate)lysine.

It belongs to the class-III pyridoxal-phosphate-dependent aminotransferase family. HemL subfamily. As to quaternary structure, homodimer. Pyridoxal 5'-phosphate serves as cofactor.

The protein resides in the cytoplasm. It carries out the reaction (S)-4-amino-5-oxopentanoate = 5-aminolevulinate. The protein operates within porphyrin-containing compound metabolism; protoporphyrin-IX biosynthesis; 5-aminolevulinate from L-glutamyl-tRNA(Glu): step 2/2. In Lysinibacillus sphaericus (strain C3-41), this protein is Glutamate-1-semialdehyde 2,1-aminomutase 1.